The chain runs to 892 residues: Alpha-actinin-1 (892 aa).

An N-acetylmethionine modification is found at M1. The tract at residues 1 to 247 (MDHYDSQQTN…IMTYVSSFYH (247 aa)) is actin-binding. S6 is modified (phosphoserine). Residue Y12 is modified to Phosphotyrosine; by FAK1. 2 consecutive Calponin-homology (CH) domains span residues 31–135 (KQQR…LRFA) and 144–250 (TSAK…HAFS). K95 and K195 each carry N6-acetyllysine. Spectrin repeat units follow at residues 274–384 (QLME…WLLN), 394–499 (HLAE…ALER), 509–620 (QLYL…ALTE), and 630–733 (RLRK…EVEN). The segment at 274–733 (QLMEDYEKLA…IARTINEVEN (460 aa)) is interaction with DDN. S471 bears the Phosphoserine mark. Position 676 is an N6-acetyllysine (K676). The residue at position 677 (S677) is a Phosphoserine. EF-hand domains follow at residues 746-781 (EQMN…LGYD) and 787-822 (QGEA…ETAD). Positions 759, 761, 763, 765, and 770 each coordinate Ca(2+). S890 is modified (phosphoserine).

This sequence belongs to the alpha-actinin family. Homodimer; antiparallel. Interacts with MYOZ2, TTID and LPP. Interacts with DDN. Interacts with PSD. Interacts with MICALL2. Interacts with DNM2 and CTTN. Interacts with PDLIM1. Interacts with PDLIM2. Interacts with PDLIM4 (via PDZ domain). Interacts with IGSF8.

It localises to the cytoplasm. It is found in the cytoskeleton. The protein localises to the myofibril. Its subcellular location is the sarcomere. The protein resides in the z line. It localises to the cell membrane. It is found in the cell junction. The protein localises to the cell projection. Its subcellular location is the ruffle. F-actin cross-linking protein which is thought to anchor actin to a variety of intracellular structures. Association with IGSF8 regulates the immune synapse formation and is required for efficient T-cell activation. This chain is Alpha-actinin-1 (ACTN1), found in Macaca fascicularis (Crab-eating macaque).